The sequence spans 759 residues: Nucleolar RNA helicase 2-A (759 aa).

The interval 1-154 is disordered; that stretch reads MPVKVYAEEM…KKRKTDTTEI (154 aa). Over residues 77 to 86 the composition is skewed to acidic residues; it reads ETAEECDGEQ. Positions 179–207 match the Q motif motif; that stretch reads GDFSKFPLSKETIKNLQAKGVSYLFPIQS. A Helicase ATP-binding domain is found at 210 to 389; that stretch reads FHTAYSGKDV…KKYMRKQFEK (180 aa). Residue 223–230 participates in ATP binding; that stretch reads ARTGTGKT. A DEAD box motif is present at residues 332–335; that stretch reads DEVD. The Helicase C-terminal domain maps to 422–566; the sequence is DLVQVYSGSH…VGVPSLLNVA (145 aa). Positions 709–759 are disordered; the sequence is QESERNFDGPRNRGFGGRGRRPFDRRNNSRNSNRGGGGRGRNRNGGFRRGR. The span at 710-719 shows a compositional bias: basic and acidic residues; the sequence is ESERNFDGPR. Residues 748–759 are compositionally biased toward basic residues; the sequence is GRNRNGGFRRGR.

This sequence belongs to the DEAD box helicase family. DDX21/DDX50 subfamily. As to expression, widely expressed. Expressed at higher level in stomach. Expressed at higher level compared to ddx21-b.

Its subcellular location is the nucleus. The protein localises to the nucleolus. It localises to the nucleoplasm. The protein resides in the cytoplasm. It is found in the cytosol. Its subcellular location is the mitochondrion. The enzyme catalyses ATP + H2O = ADP + phosphate + H(+). RNA helicase that acts as a sensor of the transcriptional status of both RNA polymerase (Pol) I and II: promotes ribosomal RNA (rRNA) processing and transcription from polymerase II (Pol II). Binds various RNAs, such as rRNAs, snoRNAs, 7SK and, at lower extent, mRNAs. In the nucleolus, localizes to rDNA locus, where it directly binds rRNAs and snoRNAs, and promotes rRNA transcription, processing and modification. Required for rRNA 2'-O-methylation, possibly by promoting the recruitment of late-acting snoRNAs SNORD56 and SNORD58 with pre-ribosomal complexes. In the nucleoplasm, binds 7SK RNA and is recruited to the promoters of Pol II-transcribed genes: acts by facilitating the release of P-TEFb from inhibitory 7SK snRNP in a manner that is dependent on its helicase activity, thereby promoting transcription of its target genes. Required to prevent R-loop-associated DNA damage and transcription-associated genomic instability. This chain is Nucleolar RNA helicase 2-A (ddx21-a), found in Xenopus laevis (African clawed frog).